Here is a 131-residue protein sequence, read N- to C-terminus: Profilin-5 (131 aa).

Cysteines 13 and 115 form a disulfide. Positions 81-97 (VVIRGKKGTGGITIKKT) match the Involved in PIP2 interaction motif. T111 carries the phosphothreonine modification.

The protein belongs to the profilin family. Multimer. Occurs in many kinds of cells as a complex with monomeric actin in a 1:1 ratio. Phosphorylated by MAP kinases. In terms of tissue distribution, expressed in vegetative tissues. Present in shoots, roots and coleoptiles. Also detected in endosperm and pollen.

The protein resides in the cytoplasm. It is found in the cytoskeleton. Actin binding is enhanced by calcium Ca(2+). Binds to actin and affects the structure of the cytoskeleton. At high concentrations, profilin prevents the polymerization of actin, whereas it enhances it at low concentrations. By binding to PIP2, it inhibits the formation of IP3 and DG. Has a high affinity for poly-proline. The protein is Profilin-5 of Zea mays (Maize).